The sequence spans 412 residues: Adipocyte plasma membrane-associated protein (412 aa).

The interval 1-32 (MTEADGLRQRRPLRPQVVTDDNRTPEAKGGSS) is disordered. At 1-39 (MTEADGLRQRRPLRPQVVTDDNRTPEAKGGSSFSGRVFR) the chain is on the cytoplasmic side. Phosphothreonine is present on Thr19. Residues 40–60 (ATFLMLAAFLTIPLLGALVLL) traverse the membrane as a helical segment. Over 61–412 (DSPIDPEPLS…RAPYLCRLRL (352 aa)) the chain is Extracellular. A glycan (N-linked (GlcNAc...) asparagine) is linked at Asn159.

This sequence belongs to the strictosidine synthase family.

It localises to the membrane. In terms of biological role, exhibits strong arylesterase activity with beta-naphthyl acetate and phenyl acetate. May play a role in adipocyte differentiation. The protein is Adipocyte plasma membrane-associated protein (APMAP) of Bos taurus (Bovine).